A 289-amino-acid polypeptide reads, in one-letter code: ATP synthase gamma chain (289 aa).

The protein belongs to the ATPase gamma chain family. In terms of assembly, F-type ATPases have 2 components, CF(1) - the catalytic core - and CF(0) - the membrane proton channel. CF(1) has five subunits: alpha(3), beta(3), gamma(1), delta(1), epsilon(1). CF(0) has three main subunits: a, b and c.

The protein resides in the cell inner membrane. Produces ATP from ADP in the presence of a proton gradient across the membrane. The gamma chain is believed to be important in regulating ATPase activity and the flow of protons through the CF(0) complex. This Coxiella burnetii (strain CbuG_Q212) (Coxiella burnetii (strain Q212)) protein is ATP synthase gamma chain.